Here is a 493-residue protein sequence, read N- to C-terminus: Aerolysin (493 aa).

The signal sequence occupies residues 1 to 23 (MQKIKLTGLSLIISGLLMAQAQA). Disulfide bonds link C42/C98 and C182/C187. The tract at residues 68-84 (WQISGLANGWVIMGPGY) is interaction with host N-linked glycan. Residues 256 to 288 (YGLSEKVTTKNKFKWPLVGETELSIEIAANQSW) are part of the transmembrane beta-barrel after proteolytic activation of the toxin and insertion into the host membrane. The interval 346 to 355 (RWGGNAWYTH) is interaction with glycans from host GPI-anchor. The propeptide occupies 446–493 (AADSKVRRARSVDGAGQGLRLEIPLDAQELSGLGFNNVSLSVTPAANQ).

It belongs to the aerolysin family. Homodimer in solution; homoheptamer in the host membrane. After binding to GPI-anchored proteins in target membranes and proteolytic removal of the C-terminal propeptide, the protein assembles into a heptameric pre-pore complex. A further conformation change leads to insertion into the host membrane. Proteolytic cleavage and subsequent release of the propeptide trigger a major conformation change, leading to the formation of a heptameric pre-pore that then inserts into the host membrane.

The protein resides in the secreted. It localises to the host cell membrane. In terms of biological role, secreted, cytolytic toxin that forms pores in host membranes after proteolytic removal of a C-terminal propeptide, leading to destruction of the membrane permeability barrier and host cell death. The pores are formed by transmembrane beta-strands and are approximately 3 nm in diameter. This chain is Aerolysin (aerA), found in Aeromonas hydrophila.